The chain runs to 225 residues: Thymidylate kinase (225 aa).

10 to 17 is an ATP binding site; sequence GGEGAGKT.

The protein belongs to the thymidylate kinase family.

It carries out the reaction dTMP + ATP = dTDP + ADP. Its function is as follows. Phosphorylation of dTMP to form dTDP in both de novo and salvage pathways of dTTP synthesis. The chain is Thymidylate kinase from Oceanobacillus iheyensis (strain DSM 14371 / CIP 107618 / JCM 11309 / KCTC 3954 / HTE831).